An 88-amino-acid polypeptide reads, in one-letter code: Small ribosomal subunit protein uS15 (88 aa).

This sequence belongs to the universal ribosomal protein uS15 family. Part of the 30S ribosomal subunit. Forms a bridge to the 50S subunit in the 70S ribosome, contacting the 23S rRNA.

One of the primary rRNA binding proteins, it binds directly to 16S rRNA where it helps nucleate assembly of the platform of the 30S subunit by binding and bridging several RNA helices of the 16S rRNA. Its function is as follows. Forms an intersubunit bridge (bridge B4) with the 23S rRNA of the 50S subunit in the ribosome. The protein is Small ribosomal subunit protein uS15 of Mycoplasmopsis agalactiae (strain NCTC 10123 / CIP 59.7 / PG2) (Mycoplasma agalactiae).